Here is a 495-residue protein sequence, read N- to C-terminus: UDP-N-acetylmuramoyl-L-alanyl-D-glutamate--2,6-diaminopimelate ligase (495 aa).

UDP-N-acetyl-alpha-D-muramoyl-L-alanyl-D-glutamate-binding positions include Leu27, Ser29, and 44–46 (HQT). 116–122 (GTNGKTT) provides a ligand contact to ATP. Residues Asn157, 158-159 (TT), Ser185, Gln191, and Arg193 each bind UDP-N-acetyl-alpha-D-muramoyl-L-alanyl-D-glutamate. Lys225 is subject to N6-carboxylysine. Meso-2,6-diaminopimelate is bound by residues Arg390, 414-417 (DNPR), Gly465, and Glu469. Positions 414-417 (DNPR) match the Meso-diaminopimelate recognition motif motif.

The protein belongs to the MurCDEF family. MurE subfamily. Mg(2+) is required as a cofactor. Carboxylation is probably crucial for Mg(2+) binding and, consequently, for the gamma-phosphate positioning of ATP.

It localises to the cytoplasm. The catalysed reaction is UDP-N-acetyl-alpha-D-muramoyl-L-alanyl-D-glutamate + meso-2,6-diaminopimelate + ATP = UDP-N-acetyl-alpha-D-muramoyl-L-alanyl-gamma-D-glutamyl-meso-2,6-diaminopimelate + ADP + phosphate + H(+). It participates in cell wall biogenesis; peptidoglycan biosynthesis. Functionally, catalyzes the addition of meso-diaminopimelic acid to the nucleotide precursor UDP-N-acetylmuramoyl-L-alanyl-D-glutamate (UMAG) in the biosynthesis of bacterial cell-wall peptidoglycan. This Photorhabdus laumondii subsp. laumondii (strain DSM 15139 / CIP 105565 / TT01) (Photorhabdus luminescens subsp. laumondii) protein is UDP-N-acetylmuramoyl-L-alanyl-D-glutamate--2,6-diaminopimelate ligase.